Reading from the N-terminus, the 264-residue chain is Small ribosomal subunit protein uS2 (264 aa).

This sequence belongs to the universal ribosomal protein uS2 family.

This Latilactobacillus sakei subsp. sakei (strain 23K) (Lactobacillus sakei subsp. sakei) protein is Small ribosomal subunit protein uS2.